A 1017-amino-acid polypeptide reads, in one-letter code: Ubiquitin-like modifier-activating enzyme 1 (1017 aa).

Repeat copies occupy residues 26 to 163 (SHET…GQLF) and 419 to 571 (GKTL…QVVV). The segment at 26-571 (SHETMKKITS…GTKGNTQVVV (546 aa)) is 2 approximate repeats. ATP contacts are provided by residues Ala438, Asp464, Arg475, Lys488, and 536–537 (DN). Cys592 serves as the catalytic Glycyl thioester intermediate. Residues 765–781 (IQTSENEPAPSSNTQQA) are compositionally biased toward polar residues. A disordered region spans residues 765–788 (IQTSENEPAPSSNTQQAGGDAEDD).

It belongs to the ubiquitin-activating E1 family. Monomer.

The catalysed reaction is ATP + ubiquitin + [E1 ubiquitin-activating enzyme]-L-cysteine = AMP + diphosphate + S-ubiquitinyl-[E1 ubiquitin-activating enzyme]-L-cysteine.. It functions in the pathway protein modification; protein ubiquitination. Its function is as follows. Catalyzes the first step in ubiquitin conjugation to mark cellular proteins for degradation through the ubiquitin-proteasome system. Activates ubiquitin by first adenylating its C-terminal glycine residue with ATP, and thereafter linking this residue to the side chain of a cysteine residue in E1, yielding a ubiquitin-E1 thioester and free AMP. This chain is Ubiquitin-like modifier-activating enzyme 1 (uba1), found in Dictyostelium discoideum (Social amoeba).